Consider the following 85-residue polypeptide: U1-theraphotoxin-Hs1a (85 aa).

The N-terminal stretch at 1-22 (MKVTLIAILTCAAVLVLHTTAA) is a signal peptide. Residues 23-48 (EELEAESQLMEVGMPDTELAAVDEER) constitute a propeptide that is removed on maturation. Intrachain disulfides connect C52–C66, C56–C77, and C71–C82.

As to quaternary structure, heterodimer composed of the two variants Ile-58 and Gln-58. In terms of tissue distribution, expressed by the venom gland.

It localises to the secreted. In terms of biological role, lethal neurotoxin that blocks neuromuscular transmission. Acts cooperatively to potentiate the activity of huwentoxin-I. This toxin is active against insects. The polypeptide is U1-theraphotoxin-Hs1a (Cyriopagopus schmidti (Chinese bird spider)).